We begin with the raw amino-acid sequence, 382 residues long: MSTWLLPENIADVLPSEARKIEELRRRLLDRFRSYGYEMVMPPLLEYLESLLTSGGADLRLRTFKLVDQLSGRTLGLRADITPQVARIDAHLLNRQGVTRLCYAGHVMHTRPRGLHATREQIQIGAEIYGHAGLEADLEIQQLMLDALHLAGLSRIRLDLCHAGVLAALLARDPQAAERGESLYDALSGKDVPLLNELTDDLGADTRAALCALPHLYGDASVLDEARARLPVLPEITRALDDLAQLAAQAKGVEVAIDLADLRGYAYHSGAMFTAYIDGVPNAIARGGRYDHVGQAYGRARPATGFSLDLRELARISPIEARGTAILAPWAQDDALGAAVAALRDAGEVVIQALPGHDHVLDEFACDRSLVERNGAWVVEPR.

This sequence belongs to the class-II aminoacyl-tRNA synthetase family. HisZ subfamily. As to quaternary structure, heteromultimer composed of HisG and HisZ subunits.

Its subcellular location is the cytoplasm. It functions in the pathway amino-acid biosynthesis; L-histidine biosynthesis; L-histidine from 5-phospho-alpha-D-ribose 1-diphosphate: step 1/9. In terms of biological role, required for the first step of histidine biosynthesis. May allow the feedback regulation of ATP phosphoribosyltransferase activity by histidine. In Burkholderia ambifaria (strain MC40-6), this protein is ATP phosphoribosyltransferase regulatory subunit.